The chain runs to 89 residues: Small ribosomal subunit protein uS15 (89 aa).

This sequence belongs to the universal ribosomal protein uS15 family. Part of the 30S ribosomal subunit. Forms a bridge to the 50S subunit in the 70S ribosome, contacting the 23S rRNA.

In terms of biological role, one of the primary rRNA binding proteins, it binds directly to 16S rRNA where it helps nucleate assembly of the platform of the 30S subunit by binding and bridging several RNA helices of the 16S rRNA. Its function is as follows. Forms an intersubunit bridge (bridge B4) with the 23S rRNA of the 50S subunit in the ribosome. This chain is Small ribosomal subunit protein uS15, found in Thermomicrobium roseum (strain ATCC 27502 / DSM 5159 / P-2).